The primary structure comprises 376 residues: Carbapenem antibiotics biosynthesis protein CarD (376 aa).

This sequence belongs to the proline oxidase family.

It participates in antibiotic biosynthesis; carbapenem biosynthesis. This Pectobacterium carotovorum subsp. carotovorum (Erwinia carotovora subsp. carotovora) protein is Carbapenem antibiotics biosynthesis protein CarD (carD).